The following is a 190-amino-acid chain: Transcription termination/antitermination protein NusG (190 aa).

Residues 138–166 form the KOW domain; that stretch reads VGEIVTVTEGPFETFTGTVEEVDQEKARL.

It belongs to the NusG family.

Functionally, participates in transcription elongation, termination and antitermination. The chain is Transcription termination/antitermination protein NusG from Rickettsia bellii (strain RML369-C).